Here is a 447-residue protein sequence, read N- to C-terminus: Adenylosuccinate synthetase (447 aa).

GTP-binding positions include 12–18 (GDEGKGK) and 40–42 (GHT). Aspartate 13 (proton acceptor) is an active-site residue. Mg(2+) is bound by residues aspartate 13 and glycine 40. IMP is bound by residues 13 to 16 (DEGK), 38 to 41 (NAGH), threonine 128, arginine 142, glutamine 223, threonine 238, and arginine 302. Catalysis depends on histidine 41, which acts as the Proton donor. 298-304 (TTTGRRR) provides a ligand contact to substrate. GTP contacts are provided by residues arginine 304, 330–332 (KLD), and 412–414 (SLG).

This sequence belongs to the adenylosuccinate synthetase family. Homodimer. Requires Mg(2+) as cofactor.

The protein localises to the cytoplasm. It carries out the reaction IMP + L-aspartate + GTP = N(6)-(1,2-dicarboxyethyl)-AMP + GDP + phosphate + 2 H(+). It functions in the pathway purine metabolism; AMP biosynthesis via de novo pathway; AMP from IMP: step 1/2. Its function is as follows. Plays an important role in the de novo pathway of purine nucleotide biosynthesis. Catalyzes the first committed step in the biosynthesis of AMP from IMP. This Microcystis aeruginosa (strain NIES-843 / IAM M-2473) protein is Adenylosuccinate synthetase.